A 274-amino-acid chain; its full sequence is Large ribosomal subunit protein uL2 (274 aa).

Residues 223–274 form a disordered region; sequence VAMNPVDHPHGGGEGRTSGGRHPVSPWGMPTKGFKTRKNKSTDKYIVRRRNK.

It belongs to the universal ribosomal protein uL2 family. Part of the 50S ribosomal subunit. Forms a bridge to the 30S subunit in the 70S ribosome.

One of the primary rRNA binding proteins. Required for association of the 30S and 50S subunits to form the 70S ribosome, for tRNA binding and peptide bond formation. It has been suggested to have peptidyltransferase activity; this is somewhat controversial. Makes several contacts with the 16S rRNA in the 70S ribosome. In Aliivibrio salmonicida (strain LFI1238) (Vibrio salmonicida (strain LFI1238)), this protein is Large ribosomal subunit protein uL2.